Reading from the N-terminus, the 292-residue chain is Shikimate dehydrogenase (NADP(+)) (292 aa).

Residues 22-24 (SLS) and serine 69 contribute to the shikimate site. Lysine 73 (proton acceptor) is an active-site residue. Residues asparagine 94 and aspartate 111 each contribute to the shikimate site. NADP(+) contacts are provided by residues 135–139 (GVGGA) and isoleucine 236. Tyrosine 238 provides a ligand contact to shikimate. Residue glycine 260 participates in NADP(+) binding.

It belongs to the shikimate dehydrogenase family. As to quaternary structure, homodimer.

It carries out the reaction shikimate + NADP(+) = 3-dehydroshikimate + NADPH + H(+). It participates in metabolic intermediate biosynthesis; chorismate biosynthesis; chorismate from D-erythrose 4-phosphate and phosphoenolpyruvate: step 4/7. Functionally, involved in the biosynthesis of the chorismate, which leads to the biosynthesis of aromatic amino acids. Catalyzes the reversible NADPH linked reduction of 3-dehydroshikimate (DHSA) to yield shikimate (SA). In Streptococcus pyogenes serotype M18 (strain MGAS8232), this protein is Shikimate dehydrogenase (NADP(+)).